Consider the following 270-residue polypeptide: Phosphonoacetaldehyde hydrolase (270 aa).

Aspartate 11 functions as the Nucleophile in the catalytic mechanism. Mg(2+)-binding residues include aspartate 11 and alanine 13. Lysine 53 (schiff-base intermediate with substrate) is an active-site residue. Mg(2+) is bound at residue aspartate 187.

It belongs to the HAD-like hydrolase superfamily. PhnX family. In terms of assembly, homodimer. Mg(2+) is required as a cofactor.

The catalysed reaction is phosphonoacetaldehyde + H2O = acetaldehyde + phosphate + H(+). Its function is as follows. Involved in phosphonate degradation. This chain is Phosphonoacetaldehyde hydrolase, found in Salmonella enteritidis PT4 (strain P125109).